The primary structure comprises 455 residues: L-serine dehydratase (455 aa).

The protein belongs to the iron-sulfur dependent L-serine dehydratase family. The cofactor is [4Fe-4S] cluster.

The catalysed reaction is L-serine = pyruvate + NH4(+). The protein operates within carbohydrate biosynthesis; gluconeogenesis. The protein is L-serine dehydratase (sdaA) of Helicobacter pylori (strain J99 / ATCC 700824) (Campylobacter pylori J99).